The sequence spans 388 residues: S-adenosylmethionine synthase (388 aa).

An ATP-binding site is contributed by H16. D18 is a binding site for Mg(2+). E44 lines the K(+) pocket. E57 and Q100 together coordinate L-methionine. Positions 100 to 110 are flexible loop; the sequence is QSPEIAQGVDR. ATP is bound by residues 165–167, D240, 246–247, A263, and K267; these read DAK and RK. D240 serves as a coordination point for L-methionine. K271 provides a ligand contact to L-methionine.

The protein belongs to the AdoMet synthase family. In terms of assembly, homotetramer; dimer of dimers. Requires Mg(2+) as cofactor. K(+) is required as a cofactor.

Its subcellular location is the cytoplasm. The catalysed reaction is L-methionine + ATP + H2O = S-adenosyl-L-methionine + phosphate + diphosphate. It functions in the pathway amino-acid biosynthesis; S-adenosyl-L-methionine biosynthesis; S-adenosyl-L-methionine from L-methionine: step 1/1. Catalyzes the formation of S-adenosylmethionine (AdoMet) from methionine and ATP. The overall synthetic reaction is composed of two sequential steps, AdoMet formation and the subsequent tripolyphosphate hydrolysis which occurs prior to release of AdoMet from the enzyme. This chain is S-adenosylmethionine synthase, found in Acinetobacter baumannii (strain AYE).